The following is a 371-amino-acid chain: Spermatogenic leucine zipper protein 1 (371 aa).

2 coiled-coil regions span residues 96-148 (EVSE…TVQD) and 177-289 (FPHI…QKEE). Ser-98 is modified (phosphoserine). Residues 110 to 120 (INKELVKKLLA) form a helix-loop-helix motif region. A basic motif region spans residues 121 to 188 (SLDLGKKENA…HIQEENIRLR (68 aa)). Ser-202 bears the Phosphoserine mark. Over residues 223-240 (KTLKNNGTHSPTQTNNES) the composition is skewed to polar residues. The tract at residues 223–246 (KTLKNNGTHSPTQTNNESAKQELE) is disordered. The segment at 245–266 (LEEQVKRLKEDTYSLHLIATLL) is leucine-zipper.

In terms of processing, phosphorylated by MAPK1/ERK2 and MAPK3/ERK1.

It is found in the cytoplasm. The protein resides in the nucleus. In terms of biological role, transcription factor that binds to the DNA sequence 5'-CANNTG-3'(E box) and the G-box motif. May play an important role in the regulation of cell proliferation and differentiation during spermatogenesis. The chain is Spermatogenic leucine zipper protein 1 (SPZ1) from Bos taurus (Bovine).